Reading from the N-terminus, the 256-residue chain is Imidazole glycerol phosphate synthase subunit HisF (256 aa).

Active-site residues include Asp11 and Asp130.

Belongs to the HisA/HisF family. As to quaternary structure, heterodimer of HisH and HisF.

Its subcellular location is the cytoplasm. It carries out the reaction 5-[(5-phospho-1-deoxy-D-ribulos-1-ylimino)methylamino]-1-(5-phospho-beta-D-ribosyl)imidazole-4-carboxamide + L-glutamine = D-erythro-1-(imidazol-4-yl)glycerol 3-phosphate + 5-amino-1-(5-phospho-beta-D-ribosyl)imidazole-4-carboxamide + L-glutamate + H(+). It participates in amino-acid biosynthesis; L-histidine biosynthesis; L-histidine from 5-phospho-alpha-D-ribose 1-diphosphate: step 5/9. In terms of biological role, IGPS catalyzes the conversion of PRFAR and glutamine to IGP, AICAR and glutamate. The HisF subunit catalyzes the cyclization activity that produces IGP and AICAR from PRFAR using the ammonia provided by the HisH subunit. The protein is Imidazole glycerol phosphate synthase subunit HisF of Cupriavidus pinatubonensis (strain JMP 134 / LMG 1197) (Cupriavidus necator (strain JMP 134)).